The chain runs to 261 residues: Small ribosomal subunit protein uS2 (261 aa).

The disordered stretch occupies residues Gly224–Asp261. A compositionally biased stretch (acidic residues) spans Glu245–Glu254.

Belongs to the universal ribosomal protein uS2 family.

The polypeptide is Small ribosomal subunit protein uS2 (Lactobacillus gasseri (strain ATCC 33323 / DSM 20243 / BCRC 14619 / CIP 102991 / JCM 1131 / KCTC 3163 / NCIMB 11718 / NCTC 13722 / AM63)).